The sequence spans 462 residues: Putative amidase AmiB2 (462 aa).

Active-site charge relay system residues include K81 and S155. Residue S179 is the Acyl-ester intermediate of the active site.

Belongs to the amidase family.

It carries out the reaction a monocarboxylic acid amide + H2O = a monocarboxylate + NH4(+). This Mycobacterium bovis (strain ATCC BAA-935 / AF2122/97) protein is Putative amidase AmiB2 (amiB2).